We begin with the raw amino-acid sequence, 448 residues long: 5-hydroxytryptamine receptor 7 (448 aa).

At 1 to 86 the chain is on the extracellular side; it reads MMDVNSSGRP…INYGRVEKVV (86 aa). N-linked (GlcNAc...) asparagine glycans are attached at residues Asn5 and Asn69. The helical transmembrane segment at 87 to 111 threads the bilayer; sequence IGSILTLITLLTIAGNCLVVISVCF. At 112 to 121 the chain is on the cytoplasmic side; the sequence is VKKLRQPSNY. The chain crosses the membrane as a helical span at residues 122-143; it reads LIVSLALADLSVAVAVMPFVSV. Over 144–155 the chain is Extracellular; that stretch reads TDLIGGKWIFGH. The chain crosses the membrane as a helical span at residues 156-181; the sequence is FFCNVFIAMDVMCCTASIMTLCVISI. Cys158 and Cys234 are oxidised to a cystine. Asp165 lines the serotonin pocket. Residues 182–201 lie on the Cytoplasmic side of the membrane; that stretch reads DRYLGITRPLTYPVRQNGKC. A helical transmembrane segment spans residues 202 to 222; it reads MAKMILSVWLLSASITLPPLF. Topologically, residues 223-240 are extracellular; sequence GWAQNVNDDKVCLISQDF. The chain crosses the membrane as a helical span at residues 241-263; that stretch reads GYTIYSTAVAFYIPMSVMLFMYY. The Cytoplasmic segment spans residues 264-329; that stretch reads QIYKAARKSA…SIFKREQKAA (66 aa). Residues 330-355 form a helical membrane-spanning segment; the sequence is TTLGIIVGAFTVCWLPFFLLSTARPF. The Extracellular segment spans residues 356-366; sequence ICGTSCSCIPL. The helical transmembrane segment at 367 to 390 threads the bilayer; it reads WVERTCLWLGYANSLINPFIYAFF. The Cytoplasmic portion of the chain corresponds to 391-448; that stretch reads NRDLRTTYRSLLQCQYRNINRKLSAAGMHEALKLAERPERSEFVLQNCDHCGKKGHDT. Cys404 carries S-palmitoyl cysteine lipidation.

The protein belongs to the G-protein coupled receptor 1 family.

It localises to the cell membrane. Functionally, G-protein coupled receptor for 5-hydroxytryptamine (serotonin), a biogenic hormone that functions as a neurotransmitter, a hormone and a mitogen. Ligand binding causes a conformation change that triggers signaling via guanine nucleotide-binding proteins (G proteins) and modulates the activity of downstream effectors. HTR7 is coupled to G(s) G alpha proteins and mediates activation of adenylate cyclase activity. This is 5-hydroxytryptamine receptor 7 (Htr7) from Mus musculus (Mouse).